Consider the following 172-residue polypeptide: Myosin regulatory light chain 2, smooth muscle major isoform (172 aa).

Over residues 1 to 16 the composition is skewed to basic residues; it reads MSSKRAKAKTTKKRPQ. The interval 1-20 is disordered; sequence MSSKRAKAKTTKKRPQRATS. N-acetylserine is present on Ser2. EF-hand domains lie at 29 to 64, 98 to 133, and 134 to 169; these read SQIQEFKEAFNMIDQNRDGFIDKEDLHDMLASMGKN, DPEDVIRNAFACFDEEASGFIHEDHLRELLTTMGDR, and FTDEEVDEMYREAPIDKKGNFNYVEFTRILKHGAKD. Positions 42, 44, 46, and 53 each coordinate Ca(2+).

Myosin is a hexamer of 2 heavy chains and 4 light chains.

Functionally, myosin regulatory subunit that plays an important role in regulation of both smooth muscle and nonmuscle cell contractile activity. Implicated in cytokinesis, receptor capping, and cell locomotion. The sequence is that of Myosin regulatory light chain 2, smooth muscle major isoform from Gallus gallus (Chicken).